The primary structure comprises 450 residues: Chromosomal replication initiator protein DnaA (450 aa).

A domain I, interacts with DnaA modulators region spans residues 1 to 77 (MTENEQIFWN…EVYNAQIAVD (77 aa)). Positions 77-109 (DYVYEDDLMIEQQHQGQQGYTEQAFQQLPAVQS) are domain II. The tract at residues 110-328 (DLNPKYSFDN…GALKDISLVA (219 aa)) is domain III, AAA+ region. ATP contacts are provided by G154, G156, K157, and T158. The domain IV, binds dsDNA stretch occupies residues 329–450 (NFKQIDTITV…EIETIKNKIK (122 aa)).

This sequence belongs to the DnaA family. Oligomerizes as a right-handed, spiral filament on DNA at oriC.

The protein resides in the cytoplasm. In terms of biological role, plays an essential role in the initiation and regulation of chromosomal replication. ATP-DnaA binds to the origin of replication (oriC) to initiate formation of the DNA replication initiation complex once per cell cycle. Binds the DnaA box (a 9 base pair repeat at the origin) and separates the double-stranded (ds)DNA. Forms a right-handed helical filament on oriC DNA; dsDNA binds to the exterior of the filament while single-stranded (ss)DNA is stabiized in the filament's interior. The ATP-DnaA-oriC complex binds and stabilizes one strand of the AT-rich DNA unwinding element (DUE), permitting loading of DNA polymerase. After initiation quickly degrades to an ADP-DnaA complex that is not apt for DNA replication. Binds acidic phospholipids. The chain is Chromosomal replication initiator protein DnaA from Streptococcus equi subsp. equi (strain 4047).